We begin with the raw amino-acid sequence, 339 residues long: Coproporphyrin III ferrochelatase (339 aa).

Fe-coproporphyrin III is bound by residues Ser-52 and Tyr-121. Residues His-181 and Glu-264 each coordinate Fe(2+).

This sequence belongs to the ferrochelatase family.

The protein resides in the cytoplasm. It carries out the reaction Fe-coproporphyrin III + 2 H(+) = coproporphyrin III + Fe(2+). Its pathway is porphyrin-containing compound metabolism; protoheme biosynthesis. Functionally, involved in coproporphyrin-dependent heme b biosynthesis. Catalyzes the insertion of ferrous iron into coproporphyrin III to form Fe-coproporphyrin III. The sequence is that of Coproporphyrin III ferrochelatase from Mycolicibacterium vanbaalenii (strain DSM 7251 / JCM 13017 / BCRC 16820 / KCTC 9966 / NRRL B-24157 / PYR-1) (Mycobacterium vanbaalenii).